The sequence spans 596 residues: Beta-glucuronidase (596 aa).

Residues D168 and N412 each coordinate D-glucuronate. Catalysis depends on E413, which acts as the Proton donor. D-glucuronate contacts are provided by N464, Y470, E502, W547, and K566. E502 serves as the catalytic Nucleophile. Positions 564 to 566 (NKK) match the N-K motif motif.

The protein belongs to the glycosyl hydrolase 2 family.

It localises to the cytoplasm. It catalyses the reaction a beta-D-glucuronoside + H2O = D-glucuronate + an alcohol. Functionally, displays beta-glucuronidase activity with the artificial substrate p-nitrophenyl-beta-D-glucuronide (PNPG). Is probably involved in the metabolism of oligosaccharides containing the 3-O-beta-D-glucopyranosyl-beta-D-glucuronide structure released from bacterial and plant acidic carbohydrates. This chain is Beta-glucuronidase, found in Paenibacillus borealis.